The primary structure comprises 496 residues: Galactose/methyl galactoside import ATP-binding protein MglA (496 aa).

2 ABC transporter domains span residues 5–240 and 243–496; these read LTIR…VGRT and KRFP…ARYL. An ATP-binding site is contributed by 37–44; the sequence is GENGAGKS.

It belongs to the ABC transporter superfamily. Galactose/methyl galactoside importer (TC 3.A.1.2.3) family. As to quaternary structure, the complex is composed of one ATP-binding protein (MglA), two transmembrane proteins (MglC) and a solute-binding protein (MglB).

It is found in the cell inner membrane. It catalyses the reaction D-galactose(out) + ATP + H2O = D-galactose(in) + ADP + phosphate + H(+). The enzyme catalyses methyl beta-D-galactoside(out) + ATP + H2O = methyl beta-D-galactoside(in) + ADP + phosphate + H(+). In terms of biological role, part of the ABC transporter complex MglABC involved in galactose/methyl galactoside import. Responsible for energy coupling to the transport system. In Treponema pallidum (strain Nichols), this protein is Galactose/methyl galactoside import ATP-binding protein MglA.